Here is a 1342-residue protein sequence, read N- to C-terminus: MVYSYTEKKRIRKDFGKRPQVLDVPYLLSIQLDSFQKFIEQDPEGQYGLEAAFRSVFPIQSYSGNSELQYVSYRLGEPVFDVQECQIRGVTYSAPLRVKLRLVIYEREAPEGTVKDIKEQEVYMGEIPLMTDNGTFVINGTERVIVSQLHRSPGVFFDSDKGKTHSSGKVLYNARIIPYRGSWLDFEFDPKDNLFVRIDRRRKLPATIILRALNYTTEQILDLFFEKVIFEIRDNKLQMELVPERLRGETASFDIEANGKVYVEKGRRITARHIRQLEKDDVKLIEVPVEYIAGKVVAKDYIDESTGELICAANMELSLELLAKLSQSGHKRIETLFTNDLDHGPYISETLRVDPTNDRLSALVEIYRMMRPGEPPTREAAESLFENLFFSEDRYDLSAVGRMKFNRSLLREEIEGSGILSKDDIIDVMKKLIDIRNGKGEVDDIDHLGNRRIRSVGEMAENQFRVGLVRVERAVKERLSLGDLDTLMPQDMINAKPISAAVKEFFGSSQLSQFMDQNNPLSEITHKRRISALGPGGLTRERAGFEVRDVHPTHYGRVCPIETPEGPNIGLINSLSVYAQTNEYGFLETPYRKVTDGVVTDEIHYLSAIEEGNYVIAQANSNLDEEGHFVEDLVTCRSKGESSLFSRDQVDYMDVSTQQVVSVGASLIPFLEHDDANRALMGANMQRQAVPTLRADKPLVGTGMERAVAVDSGVTAVAKRGGVVQYVDASRIVIKVNEDEMYPGEAGIDIYNLTKYTRSNQNTCINQMPCVSLGEPVERGDVLADGPSTDLGELALGQNMRVAFMPWNGYNFEDSILVSERVVQEDRFTTIHIQELACVSRDTKLGPEEITADIPNVGEAALSKLDESGIVYIGAEVTGGDILVGKVTPKGETQLTPEEKLLRAIFGEKASDVKDSSLRVPNGVSGTVIDVQVFTRDGVEKDKRALEIEEMQLKQAKKDLSEELQILEAGLFSRIRAVLVAGGVEAEKLDKLPRDRWLELGLTDEEKQNQLEQLAEQYDELKHEFEKKLEAKRRKITQGDDLAPGVLKIVKVYLAVKRRIQPGDKMAGRHGNKGVISKINPIEDMPYDENGTPVDIVLNPLGVPSRMNIGQILETHLGMAAKGIGDKINAMLKQQQEVAKLREFIQRAYDLGADVRQKVDLSTFSDEEVMRLAENLRKGMPIATPVFDGAKEAEIKELLKLGDLPTSGQIRLYDGRTGEQFERPVTVGYMYMLKLNHLVDDKMHARSTGSYSLVTQQPLGGKAQFGGQRFGEMEVWALEAYGAAYTLQEMLTVKSDDVNGRTKMYKNIVDGNHQMEPGMPESFNVLLKEIRSLGINIELEDE.

2 positions are modified to N6-acetyllysine: Lys1022 and Lys1200.

It belongs to the RNA polymerase beta chain family. In terms of assembly, the RNAP catalytic core consists of 2 alpha, 1 beta, 1 beta' and 1 omega subunit. When a sigma factor is associated with the core the holoenzyme is formed, which can initiate transcription.

It catalyses the reaction RNA(n) + a ribonucleoside 5'-triphosphate = RNA(n+1) + diphosphate. Functionally, DNA-dependent RNA polymerase catalyzes the transcription of DNA into RNA using the four ribonucleoside triphosphates as substrates. This chain is DNA-directed RNA polymerase subunit beta, found in Shigella dysenteriae serotype 1 (strain Sd197).